The sequence spans 426 residues: MTATNELLQDLKARGLIAQCTADEELAEHLSTDCRTLYCGFDPTADSLHIGSLVPLLVLKRFQQAGHKPLALVGGATGLIGDPSFKAAERQLNTSDVVGDWVNKIRAQVSAFVDFNESKNGAEVVNNLDWIGEINVIEFMRDIGKHFSVNSMIQKESVKQRIDREGSGISFTEFSYMLLQSYDFAALNKAKECTLQIGGSDQWGNITGGIDLTRRMNRNKVFGLTLPLVTKSDGTKFGKTESGTIWLDPSKTSPYAFFQFWLGTADADVYDFLRFFTFLSVDEIAAFEESDKSVQGRPAGQGVLAKEVTRLVHGEEGLASSERITAALFSGDLASLTETDLAQLAQDGLPTTELEASEQTIVEVLTQSELAKSNKMAREFIGNGAVSVNGEKVADAEVILKKEDALFGKYSVIKRGKKLFNLYIWK.

Y38 contacts L-tyrosine. Residues 43–52 carry the 'HIGH' region motif; sequence PTADSLHIGS. Residues Y176 and Q180 each contribute to the L-tyrosine site. A 'KMSKS' region motif is present at residues 236–240; the sequence is KFGKT. ATP is bound at residue K239. The 68-residue stretch at 359 to 426 folds into the S4 RNA-binding domain; it reads QTIVEVLTQS…KKLFNLYIWK (68 aa).

This sequence belongs to the class-I aminoacyl-tRNA synthetase family. TyrS type 1 subfamily. As to quaternary structure, homodimer.

It localises to the cytoplasm. The catalysed reaction is tRNA(Tyr) + L-tyrosine + ATP = L-tyrosyl-tRNA(Tyr) + AMP + diphosphate + H(+). Functionally, catalyzes the attachment of tyrosine to tRNA(Tyr) in a two-step reaction: tyrosine is first activated by ATP to form Tyr-AMP and then transferred to the acceptor end of tRNA(Tyr). In Aliivibrio salmonicida (strain LFI1238) (Vibrio salmonicida (strain LFI1238)), this protein is Tyrosine--tRNA ligase.